Reading from the N-terminus, the 141-residue chain is High mobility group B protein 3 (141 aa).

2 stretches are compositionally biased toward basic and acidic residues: residues 1–12 (MKGAKSKAETRS) and 70–110 (GGEK…LEEG). Disordered regions lie at residues 1-40 (MKGAKSKAETRSTKLSVTKKPAKGAKGAAKDPNKPKRPSS) and 54-141 (KEEH…EDDD). Residues 35 to 104 (PKRPSSAFFV…EYEKNMKAYN (70 aa)) constitute a DNA-binding region (HMG box). Serine 122 bears the Phosphoserine mark. Acidic residues predominate over residues 124–141 (VNDEDDAEDGSEEEEDDD).

This sequence belongs to the HMGB family. As to expression, expressed in lateral roots, root tips, stems, cotyledons, leaves and flowers (excluding ovary and pedicels).

It localises to the nucleus. The protein resides in the cytoplasm. It is found in the cytosol. Binds preferentially double-stranded DNA. The chain is High mobility group B protein 3 (HMGB3) from Arabidopsis thaliana (Mouse-ear cress).